We begin with the raw amino-acid sequence, 262 residues long: Expansin-A7 (262 aa).

The signal sequence occupies residues 1 to 30 (MGPISSSWSFNKFFSIVFVVFAISGEFVAG). Residues 55–167 (GGACGYGNLF…RRVPCQRSGG (113 aa)) form the Expansin-like EG45 domain. Cystine bridges form between Cys58-Cys86, Cys89-Cys162, and Cys94-Cys100. Residues 177 to 257 (YWLLIFVMNV…NWSGGKTYKS (81 aa)) enclose the Expansin-like CBD domain.

It belongs to the expansin family. Expansin A subfamily.

It localises to the secreted. It is found in the cell wall. The protein localises to the membrane. Causes loosening and extension of plant cell walls by disrupting non-covalent bonding between cellulose microfibrils and matrix glucans. No enzymatic activity has been found. The chain is Expansin-A7 (EXPA7) from Arabidopsis thaliana (Mouse-ear cress).